We begin with the raw amino-acid sequence, 305 residues long: C alpha-dehydrogenase (305 aa).

10–34 (FITGGASGAGFGQAKVFGQAGAKIV) provides a ligand contact to NAD(+). Residue S144 participates in substrate binding. Y157 acts as the Proton acceptor in catalysis.

The protein belongs to the short-chain dehydrogenases/reductases (SDR) family.

Its pathway is secondary metabolite metabolism; lignin degradation. In terms of biological role, catalyzes the C alpha dehydrogenation of arylglycerol-beta-aryl ether (C alpha alcohol type) (compound IV). The sequence is that of C alpha-dehydrogenase (ligD) from Sphingobium sp. (strain NBRC 103272 / SYK-6).